A 421-amino-acid chain; its full sequence is Imidazolonepropionase (421 aa).

Residues histidine 81 and histidine 83 each contribute to the Fe(3+) site. Zn(2+) is bound by residues histidine 81 and histidine 83. 4-imidazolone-5-propanoate is bound by residues arginine 90, tyrosine 153, and histidine 186. Tyrosine 153 contacts N-formimidoyl-L-glutamate. A Fe(3+)-binding site is contributed by histidine 251. Histidine 251 contacts Zn(2+). 4-imidazolone-5-propanoate is bound at residue glutamate 254. A Fe(3+)-binding site is contributed by aspartate 326. Zn(2+) is bound at residue aspartate 326. Residues asparagine 328 and glycine 330 each coordinate N-formimidoyl-L-glutamate. 4-imidazolone-5-propanoate is bound at residue serine 331.

It belongs to the metallo-dependent hydrolases superfamily. HutI family. Zn(2+) serves as cofactor. The cofactor is Fe(3+).

Its subcellular location is the cytoplasm. The enzyme catalyses 4-imidazolone-5-propanoate + H2O = N-formimidoyl-L-glutamate. It functions in the pathway amino-acid degradation; L-histidine degradation into L-glutamate; N-formimidoyl-L-glutamate from L-histidine: step 3/3. Functionally, catalyzes the hydrolytic cleavage of the carbon-nitrogen bond in imidazolone-5-propanoate to yield N-formimidoyl-L-glutamate. It is the third step in the universal histidine degradation pathway. This is Imidazolonepropionase from Streptococcus pyogenes serotype M2 (strain MGAS10270).